The primary structure comprises 238 residues: Flagellar L-ring protein (238 aa).

The first 16 residues, 1 to 16 (MNKAILAVAMVLLLAG), serve as a signal peptide directing secretion. A lipid anchor (N-palmitoyl cysteine) is attached at cysteine 17. The S-diacylglycerol cysteine moiety is linked to residue cysteine 17.

The protein belongs to the FlgH family. As to quaternary structure, the basal body constitutes a major portion of the flagellar organelle and consists of four rings (L,P,S, and M) mounted on a central rod.

It is found in the cell outer membrane. It localises to the bacterial flagellum basal body. Functionally, assembles around the rod to form the L-ring and probably protects the motor/basal body from shearing forces during rotation. The polypeptide is Flagellar L-ring protein (Brucella canis (strain ATCC 23365 / NCTC 10854 / RM-666)).